The primary structure comprises 239 residues: Leucyl/phenylalanyl-tRNA--protein transferase (239 aa).

The protein belongs to the L/F-transferase family.

It is found in the cytoplasm. The enzyme catalyses N-terminal L-lysyl-[protein] + L-leucyl-tRNA(Leu) = N-terminal L-leucyl-L-lysyl-[protein] + tRNA(Leu) + H(+). The catalysed reaction is N-terminal L-arginyl-[protein] + L-leucyl-tRNA(Leu) = N-terminal L-leucyl-L-arginyl-[protein] + tRNA(Leu) + H(+). It catalyses the reaction L-phenylalanyl-tRNA(Phe) + an N-terminal L-alpha-aminoacyl-[protein] = an N-terminal L-phenylalanyl-L-alpha-aminoacyl-[protein] + tRNA(Phe). Functions in the N-end rule pathway of protein degradation where it conjugates Leu, Phe and, less efficiently, Met from aminoacyl-tRNAs to the N-termini of proteins containing an N-terminal arginine or lysine. The polypeptide is Leucyl/phenylalanyl-tRNA--protein transferase (Aliivibrio fischeri (strain ATCC 700601 / ES114) (Vibrio fischeri)).